The primary structure comprises 305 residues: tRNA pseudouridine synthase B (305 aa).

The Nucleophile role is filled by aspartate 39.

It belongs to the pseudouridine synthase TruB family. Type 1 subfamily.

It carries out the reaction uridine(55) in tRNA = pseudouridine(55) in tRNA. Functionally, responsible for synthesis of pseudouridine from uracil-55 in the psi GC loop of transfer RNAs. The chain is tRNA pseudouridine synthase B from Staphylococcus saprophyticus subsp. saprophyticus (strain ATCC 15305 / DSM 20229 / NCIMB 8711 / NCTC 7292 / S-41).